The primary structure comprises 87 residues: Sec-independent protein translocase protein TatA (87 aa).

Residues 3 to 23 form a helical membrane-spanning segment; that stretch reads GTFSWTHLLIIALLFVVLFGA. The tract at residues 47–87 is disordered; sequence MQHETPQANAAPVQQPAQQLPPAQPAQAPAQPVNQAEQKSA. The segment covering 52-87 has biased composition (low complexity); sequence PQANAAPVQQPAQQLPPAQPAQAPAQPVNQAEQKSA.

Belongs to the TatA/E family. In terms of assembly, the Tat system comprises two distinct complexes: a TatABC complex, containing multiple copies of TatA, TatB and TatC subunits, and a separate TatA complex, containing only TatA subunits. Substrates initially bind to the TatABC complex, which probably triggers association of the separate TatA complex to form the active translocon.

It localises to the cell membrane. In terms of biological role, part of the twin-arginine translocation (Tat) system that transports large folded proteins containing a characteristic twin-arginine motif in their signal peptide across membranes. TatA could form the protein-conducting channel of the Tat system. The protein is Sec-independent protein translocase protein TatA of Nocardia farcinica (strain IFM 10152).